A 400-amino-acid polypeptide reads, in one-letter code: Hyaluronan and proteoglycan link protein 4 (400 aa).

An N-terminal signal peptide occupies residues 1-30; the sequence is MACAPGALGHRALWAVAWGLLLLVPVLAGA. The 109-residue stretch at 47-155 folds into the Ig-like C2-type domain; the sequence is SVVVQTAPGQ…VTNELEDDVG (109 aa). Intrachain disulfides connect Cys69-Cys144, Cys186-Cys264, Cys210-Cys231, Cys291-Cys361, and Cys316-Cys337. Asn133 carries N-linked (GlcNAc...) asparagine glycosylation. Link domains follow at residues 164–266 and 271–363; these read VVFP…FCFT and GRVF…YCYR.

The protein belongs to the HAPLN family. In terms of tissue distribution, expressed predominantly in brain where it is found mainly throughout the midbrain and hindbrain in a perineuronal net pattern.

The protein resides in the secreted. Its subcellular location is the extracellular space. It is found in the extracellular matrix. Essential for the proper localization of brevican (BCAN), mainly as a perineuronal nets (PNNs)-type deposition in the brainstem and cerebellum thereby playing a key role in the formation and structural organization of PNNs. Contributes to the formation and transmission of inhibitory GABAergic synapses between Purkinje cells and deep cerebellar nuclei neurons. The chain is Hyaluronan and proteoglycan link protein 4 (Hapln4) from Mus musculus (Mouse).